A 282-amino-acid polypeptide reads, in one-letter code: Putative phosphoenolpyruvate synthase regulatory protein (282 aa).

Residue 161-168 (GVSRSGKT) participates in ADP binding.

Belongs to the pyruvate, phosphate/water dikinase regulatory protein family. PSRP subfamily.

It catalyses the reaction [pyruvate, water dikinase] + ADP = [pyruvate, water dikinase]-phosphate + AMP + H(+). It carries out the reaction [pyruvate, water dikinase]-phosphate + phosphate + H(+) = [pyruvate, water dikinase] + diphosphate. Bifunctional serine/threonine kinase and phosphorylase involved in the regulation of the phosphoenolpyruvate synthase (PEPS) by catalyzing its phosphorylation/dephosphorylation. The chain is Putative phosphoenolpyruvate synthase regulatory protein from Janthinobacterium sp. (strain Marseille) (Minibacterium massiliensis).